Reading from the N-terminus, the 92-residue chain is Small ribosomal subunit protein uS19c (92 aa).

It belongs to the universal ribosomal protein uS19 family.

Its subcellular location is the plastid. The protein resides in the chloroplast. Its function is as follows. Protein S19 forms a complex with S13 that binds strongly to the 16S ribosomal RNA. This Chaetosphaeridium globosum (Charophycean green alga) protein is Small ribosomal subunit protein uS19c.